Reading from the N-terminus, the 248-residue chain is PF03932 family protein CutC (248 aa).

This sequence belongs to the CutC family. In terms of assembly, homodimer.

The protein resides in the cytoplasm. The protein is PF03932 family protein CutC of Escherichia coli O7:K1 (strain IAI39 / ExPEC).